The chain runs to 4540 residues: Dynein heavy chain, cytoplasmic (4540 aa).

The stem stretch occupies residues 1 to 1796 (MEESETQLNV…LIQMGNAQFH (1796 aa)). Coiled coils occupy residues 440-482 (EHIK…NVQQ), 698-722 (RVNYEKKLSQLFKEVRNLSNMKTKV), 794-827 (VKKFTDKVFELEQAVNGLNERIGQIESLCEAMKT), 975-995 (QQLIKDAYSQIGQLLEDMEQY), 1169-1251 (RSKK…LKMD), and 1295-1311 (QNKKIKDTCDEAQKQLN). AAA stretches follow at residues 1797-2018 (YGFE…VLNS), 2091-2348 (KELA…FTRI), 2457-2705 (EIDP…WKYA), and 2796-3056 (QFNE…AKRF). ATP is bound by residues 1835 to 1842 (GPAGTGKT), 2129 to 2136 (GPCGCGKS), 2496 to 2503 (GPPGSGKT), and 2834 to 2841 (GSSGVGKT). Coiled coils occupy residues 3076-3182 (NEKK…NAKQ), 3289-3367 (QLKY…RSQA), 3653-3688 (EDEKVIQTLEKLKKEAAVIVQEMKQADTIMNEVMNT), and 3820-3851 (QQLKQLEGITQQNQTFNRLIDNLNKNEDRWLN). Positions 3076–3367 (NEKKSQLEDQ…VQEKVTRSQA (292 aa)) are stalk. Residues 3140-3159 (KKKEDSTRLSSDAEKKAKEM) are disordered. The AAA 5 stretch occupies residues 3444–3673 (LSRPSDRLNW…LKKEAAVIVQ (230 aa)). The AAA 6 stretch occupies residues 3908-4123 (ARKLINQILG…QRCSLDLIDE (216 aa)). Coiled coils occupy residues 4238 to 4259 (QKLITKVQNLQQEGEEEITQIE) and 4313 to 4342 (RFLDREITVASKLLKAVRQNIEELIQLAQG).

It belongs to the dynein heavy chain family. In terms of assembly, consists of at least two heavy chains and a number of intermediate and light chains.

The protein resides in the cytoplasm. The protein localises to the cytoskeleton. In terms of biological role, cytoplasmic dynein acts as a motor for the intracellular retrograde motility of vesicles and organelles along microtubules. Dynein has ATPase activity; the force-producing power stroke is thought to occur on release of ADP. This is Dynein heavy chain, cytoplasmic (DHC-8) from Paramecium tetraurelia.